We begin with the raw amino-acid sequence, 146 residues long: Hemoglobin subunit beta (146 aa).

One can recognise a Globin domain in the interval glutamine 2–histidine 146. The heme b site is built by histidine 63 and histidine 92.

Belongs to the globin family. Heterotetramer of two alpha chains and two beta chains. In terms of tissue distribution, red blood cells.

Involved in oxygen transport from the lung to the various peripheral tissues. This is Hemoglobin subunit beta (hbb) from Artedidraco orianae (Barbeled plunderfish).